The primary structure comprises 113 residues: ATP-dependent Clp protease adapter protein ClpS (113 aa).

Positions 1–24 are disordered; that stretch reads MTAQLHMMSDKHDQDNDASVLLQT.

It belongs to the ClpS family. As to quaternary structure, binds to the N-terminal domain of the chaperone ClpA.

Functionally, involved in the modulation of the specificity of the ClpAP-mediated ATP-dependent protein degradation. The chain is ATP-dependent Clp protease adapter protein ClpS from Ruegeria pomeroyi (strain ATCC 700808 / DSM 15171 / DSS-3) (Silicibacter pomeroyi).